The primary structure comprises 803 residues: Rho guanine nucleotide exchange factor 7 (803 aa).

Met1 is modified (N-acetylmethionine). The region spanning Met1–Ala133 is the Calponin-homology (CH) domain. Position 2 is an N-acetylthreonine (Asn2). Ser153 and Ser176 each carry phosphoserine. One can recognise an SH3 domain in the interval Asn184–Ala243. Ser249 and Ser257 each carry phosphoserine. Positions Tyr271 to Val451 constitute a DH domain. The 106-residue stretch at Asp473–Lys578 folds into the PH domain. Residues Ser518, Cys560, and Val579 each carry the phosphoserine modification. Positions Thr580–Leu655 are disordered. Positions Pro593–Ser606 are enriched in polar residues. Phosphoserine occurs at positions 645 and 664. The span at Lys678–Glu690 shows a compositional bias: basic residues. Disordered regions lie at residues Lys678 to Thr704 and Asp748 to Asp773. Over residues Arg691–Ser700 the composition is skewed to basic and acidic residues. Ser694 bears the Phosphoserine; by CaMK1 mark. Over residues Ser752 to Leu765 the composition is skewed to low complexity.

Interacts with PAK kinases through the SH3 domain. Interacts with GIT1 and TGFB1I1. Interacts with PTK2/FAK1 and RAC1. Interacts with ITCH and PARVB. Interacts with unphosphorylated PAK1. Interacts with SCRIB; interaction is direct and may play a role in regulation of apoptosis. Interacts with FRMPD4 (via N-terminus). Interacts with CaMK1. Interacts with BIN2. Interacts with YWHAZ. Interacts (via PH domain) with NOX1 (via FAD-binding FR-type domain). As to quaternary structure, interacts with SNX27. Phosphorylated by PTK2/FAK1; this promotes interaction with RAC1. Phosphorylated on Ser-694 by CaMK1; enhancement of GEF activity and downstream activation of RAC1.

The protein localises to the cell junction. It localises to the focal adhesion. It is found in the cell projection. The protein resides in the ruffle. Its subcellular location is the cytoplasm. The protein localises to the cell cortex. It localises to the lamellipodium. Its function is as follows. Acts as a RAC1 guanine nucleotide exchange factor (GEF) and can induce membrane ruffling. Functions in cell migration, attachment and cell spreading. Promotes targeting of RAC1 to focal adhesions. May function as a positive regulator of apoptosis. Downstream of NMDA receptors and CaMKK-CaMK1 signaling cascade, promotes the formation of spines and synapses in hippocampal neurons. The chain is Rho guanine nucleotide exchange factor 7 (ARHGEF7) from Homo sapiens (Human).